Reading from the N-terminus, the 117-residue chain is Flagellar transcriptional regulator FlhD (117 aa).

Belongs to the FlhD family. As to quaternary structure, homodimer; disulfide-linked. Forms a heterohexamer composed of two FlhC and four FlhD subunits. Each FlhC binds a FlhD dimer, forming a heterotrimer, and a hexamer assembles by dimerization of two heterotrimers.

The protein resides in the cytoplasm. Functions in complex with FlhC as a master transcriptional regulator that regulates transcription of several flagellar and non-flagellar operons by binding to their promoter region. Activates expression of class 2 flagellar genes, including fliA, which is a flagellum-specific sigma factor that turns on the class 3 genes. Also regulates genes whose products function in a variety of physiological pathways. The polypeptide is Flagellar transcriptional regulator FlhD (Erwinia amylovora (strain CFBP1430)).